Reading from the N-terminus, the 415-residue chain is Tyrosine--tRNA ligase (415 aa).

The 'HIGH' region motif lies at Pro-54–His-63. The 'KMSKS' region signature appears at Lys-248–Ser-252. ATP is bound at residue Lys-251. The 65-residue stretch at Ala-351–Thr-415 folds into the S4 RNA-binding domain.

This sequence belongs to the class-I aminoacyl-tRNA synthetase family. TyrS type 2 subfamily. In terms of assembly, homodimer.

Its subcellular location is the cytoplasm. It catalyses the reaction tRNA(Tyr) + L-tyrosine + ATP = L-tyrosyl-tRNA(Tyr) + AMP + diphosphate + H(+). Catalyzes the attachment of tyrosine to tRNA(Tyr) in a two-step reaction: tyrosine is first activated by ATP to form Tyr-AMP and then transferred to the acceptor end of tRNA(Tyr). The protein is Tyrosine--tRNA ligase of Prochlorococcus marinus (strain NATL2A).